A 542-amino-acid polypeptide reads, in one-letter code: Doublesex- and mab-3-related transcription factor A2 (542 aa).

The DM DNA-binding region spans 70 to 117 (CARCRNHGVVSALKGHKRYCRWKDCLCAKCTLIAERQRVMAAQVALRR). The tract at residues 201 to 316 (LQAGRPGSPL…GGSGPRQRTP (116 aa)) is disordered. The region spanning 314-349 (RTPLDILTRVFPGHRRGVLELVLQGCGGDVVQAIEQ) is the DMA domain.

Belongs to the DMRT family. In terms of tissue distribution, expressed in testis.

It localises to the nucleus. May be involved in sexual development. The sequence is that of Doublesex- and mab-3-related transcription factor A2 (DMRTA2) from Homo sapiens (Human).